Here is a 313-residue protein sequence, read N- to C-terminus: Porphobilinogen deaminase (313 aa).

At cysteine 249 the chain carries S-(dipyrrolylmethanemethyl)cysteine.

This sequence belongs to the HMBS family. Monomer. It depends on dipyrromethane as a cofactor.

The catalysed reaction is 4 porphobilinogen + H2O = hydroxymethylbilane + 4 NH4(+). The protein operates within porphyrin-containing compound metabolism; protoporphyrin-IX biosynthesis; coproporphyrinogen-III from 5-aminolevulinate: step 2/4. Tetrapolymerization of the monopyrrole PBG into the hydroxymethylbilane pre-uroporphyrinogen in several discrete steps. The protein is Porphobilinogen deaminase of Paracoccus denitrificans (strain Pd 1222).